We begin with the raw amino-acid sequence, 298 residues long: UDP-N-acetylenolpyruvoylglucosamine reductase (298 aa).

One can recognise an FAD-binding PCMH-type domain in the interval 26–191 (KTGGPADWLA…LDATFALEPG (166 aa)). Arginine 170 is a catalytic residue. Serine 220 (proton donor) is an active-site residue. Residue glutamate 290 is part of the active site.

This sequence belongs to the MurB family. FAD is required as a cofactor.

Its subcellular location is the cytoplasm. The catalysed reaction is UDP-N-acetyl-alpha-D-muramate + NADP(+) = UDP-N-acetyl-3-O-(1-carboxyvinyl)-alpha-D-glucosamine + NADPH + H(+). It functions in the pathway cell wall biogenesis; peptidoglycan biosynthesis. Cell wall formation. The sequence is that of UDP-N-acetylenolpyruvoylglucosamine reductase from Limosilactobacillus reuteri subsp. reuteri (strain JCM 1112) (Lactobacillus reuteri).